A 309-amino-acid polypeptide reads, in one-letter code: Porphobilinogen deaminase (309 aa).

Cys243 is modified (S-(dipyrrolylmethanemethyl)cysteine).

Belongs to the HMBS family. In terms of assembly, monomer. Dipyrromethane serves as cofactor.

It catalyses the reaction 4 porphobilinogen + H2O = hydroxymethylbilane + 4 NH4(+). The protein operates within porphyrin-containing compound metabolism; protoporphyrin-IX biosynthesis; coproporphyrinogen-III from 5-aminolevulinate: step 2/4. In terms of biological role, tetrapolymerization of the monopyrrole PBG into the hydroxymethylbilane pre-uroporphyrinogen in several discrete steps. The chain is Porphobilinogen deaminase from Deinococcus geothermalis (strain DSM 11300 / CIP 105573 / AG-3a).